Reading from the N-terminus, the 125-residue chain is Fluoride-specific ion channel FluC (125 aa).

4 consecutive transmembrane segments (helical) span residues 7–27 (FFIV…MAVV), 36–56 (GFPY…GFLS), 63–83 (PYGR…FSTF), and 96–116 (FIFA…GVFC). 2 residues coordinate Na(+): Gly-75 and Thr-78.

Belongs to the fluoride channel Fluc/FEX (TC 1.A.43) family.

Its subcellular location is the cell inner membrane. It carries out the reaction fluoride(in) = fluoride(out). Na(+) is not transported, but it plays an essential structural role and its presence is essential for fluoride channel function. In terms of biological role, fluoride-specific ion channel. Important for reducing fluoride concentration in the cell, thus reducing its toxicity. The protein is Fluoride-specific ion channel FluC of Elusimicrobium minutum (strain Pei191).